The following is a 936-amino-acid chain: MutS protein homolog 4 (936 aa).

Disordered regions lie at residues 1 to 83 and 103 to 133; these read MLRP…AQGS and GASS…SGYK. Residues 7–20 show a composition bias toward low complexity; the sequence is SSTSPSAPAVSPSS. Residues 35–55 are compositionally biased toward polar residues; sequence LQETPQSRPSVQVVSASTCPG. Residue 680 to 687 participates in ATP binding; the sequence is GPNMSGKS.

It belongs to the DNA mismatch repair MutS family. Heterooligomer of MSH4 and MSH5. In terms of tissue distribution, highly expressed in testis. Also expressed in the ovary.

It is found in the chromosome. Functionally, involved in meiotic recombination. Required for reciprocal recombination and proper segregation of homologous chromosomes at meiosis. The chain is MutS protein homolog 4 (MSH4) from Homo sapiens (Human).